Consider the following 136-residue polypeptide: Holo-[acyl-carrier-protein] synthase (136 aa).

Residues Asp-7 and Glu-53 each coordinate Mg(2+).

It belongs to the P-Pant transferase superfamily. AcpS family. Mg(2+) serves as cofactor.

The protein localises to the cytoplasm. It catalyses the reaction apo-[ACP] + CoA = holo-[ACP] + adenosine 3',5'-bisphosphate + H(+). In terms of biological role, transfers the 4'-phosphopantetheine moiety from coenzyme A to a Ser of acyl-carrier-protein. The protein is Holo-[acyl-carrier-protein] synthase of Roseiflexus castenholzii (strain DSM 13941 / HLO8).